The sequence spans 140 residues: Type II secretion system core protein G (140 aa).

A propeptide spans 1–6 (MQRQRG) (leader sequence). At F7 the chain carries N-methylphenylalanine. A helical transmembrane segment spans residues 7 to 27 (FTLLEIMVVIVILGVLASLVV). The disordered stretch occupies residues 120–140 (LGPDGVPESNDDIGNWTIGKK).

It belongs to the GSP G family. Type II secretion system is composed of four main components: the outer membrane complex, the inner membrane complex, the cytoplasmic secretion ATPase and the periplasm-spanning pseudopilus. Forms homomultimers. Cleaved by the prepilin peptidase. In terms of processing, methylated by prepilin peptidase at the amino group of the N-terminal phenylalanine once the leader sequence is cleaved.

Its subcellular location is the cell inner membrane. Functionally, core component of the type II secretion system required for the energy-dependent secretion of extracellular factors such as proteases and toxins from the periplasm. Pseudopilin (pilin-like) protein that polymerizes to form the pseudopilus. Further polymerization triggers pseudopilus growth. In Klebsiella pneumoniae, this protein is Type II secretion system core protein G (pulG).